The chain runs to 20 residues: Dermaseptin-N1 (20 aa).

A Leucine amide modification is found at leucine 20.

In terms of tissue distribution, expressed by the skin glands.

It is found in the secreted. Its function is as follows. Antimicrobial peptide with moderate activity against both Gram-positive and Gram-negative bacteria, and important activity against Leishmania species (L.amazonensis and L.infantum). Acts on both Leishmania promastigote and amastigote forms. Shows activity against E.coli (MIC=17.8 uM), S.aureus (MIC=32.3 uM) and the phytopathogenic bacterium Xanthomonas axonopodis (MIC=2 uM). Shows low cytotoxicity against mammalian cells in models of peritoneal macrophages. The chain is Dermaseptin-N1 from Pithecopus nordestinus (Northeastern Brazilian leaf frog).